A 195-amino-acid polypeptide reads, in one-letter code: Imidazoleglycerol-phosphate dehydratase (195 aa).

The protein belongs to the imidazoleglycerol-phosphate dehydratase family.

Its subcellular location is the cytoplasm. The catalysed reaction is D-erythro-1-(imidazol-4-yl)glycerol 3-phosphate = 3-(imidazol-4-yl)-2-oxopropyl phosphate + H2O. Its pathway is amino-acid biosynthesis; L-histidine biosynthesis; L-histidine from 5-phospho-alpha-D-ribose 1-diphosphate: step 6/9. The polypeptide is Imidazoleglycerol-phosphate dehydratase (Paraburkholderia phymatum (strain DSM 17167 / CIP 108236 / LMG 21445 / STM815) (Burkholderia phymatum)).